We begin with the raw amino-acid sequence, 272 residues long: HMP-PP phosphatase (272 aa).

The active-site Nucleophile is the Asp8. 3 residues coordinate Mg(2+): Asp8, Asp10, and Asp212.

Belongs to the HAD-like hydrolase superfamily. Cof family. Requires Mg(2+) as cofactor.

It carries out the reaction 4-amino-2-methyl-5-(diphosphooxymethyl)pyrimidine + H2O = 4-amino-2-methyl-5-(phosphooxymethyl)pyrimidine + phosphate + H(+). Functionally, catalyzes the hydrolysis of 4-amino-2-methyl-5-hydroxymethylpyrimidine pyrophosphate (HMP-PP) to 4-amino-2-methyl-5-hydroxymethylpyrimidine phosphate (HMP-P). This chain is HMP-PP phosphatase, found in Enterobacter sp. (strain 638).